An 893-amino-acid chain; its full sequence is Translation initiation factor IF-2 (893 aa).

A disordered region spans residues 49–303 (LNREAGSGPD…KGSSLQQGFQ (255 aa)). Residues 68–82 (STLNIPGTGGKSKSV) show a composition bias toward polar residues. Basic and acidic residues-rich tracts occupy residues 93–159 (VKRD…KDKV) and 166–216 (DMTK…EENK). Over residues 254–269 (GRGRNAKAARPAKKGN) the composition is skewed to basic residues. The segment covering 270–283 (KHAESKADREEARA) has biased composition (basic and acidic residues). A tr-type G domain is found at 392–561 (PRAPVVTIMG…LLQAEVLELK (170 aa)). Positions 401–408 (GHVDHGKT) are G1. Residue 401–408 (GHVDHGKT) coordinates GTP. The tract at residues 426–430 (GITQH) is G2. Residues 447–450 (DTPG) form a G3 region. Residues 447-451 (DTPGH) and 501-504 (NKID) each bind GTP. Residues 501–504 (NKID) are G4. A G5 region spans residues 537–539 (SAK).

This sequence belongs to the TRAFAC class translation factor GTPase superfamily. Classic translation factor GTPase family. IF-2 subfamily.

Its subcellular location is the cytoplasm. Functionally, one of the essential components for the initiation of protein synthesis. Protects formylmethionyl-tRNA from spontaneous hydrolysis and promotes its binding to the 30S ribosomal subunits. Also involved in the hydrolysis of GTP during the formation of the 70S ribosomal complex. This is Translation initiation factor IF-2 from Salmonella arizonae (strain ATCC BAA-731 / CDC346-86 / RSK2980).